Consider the following 557-residue polypeptide: Hemolysin transporter protein ShlB (557 aa).

A signal peptide spans 1-18 (MIKKITALTLLVSTALSA). The 74-residue stretch at 79–152 (LPIAGVYLQG…GELGLSVTEG (74 aa)) folds into the POTRA domain.

Belongs to the TPS (TC 1.B.20) family.

The protein localises to the cell outer membrane. Interacts with the cell-bound hemolysin. Necessary for the extracellular secretion and activation of hemolysin. Its function is as follows. Member of a two partner secretion pathway (TPS) in which it mediates the secretion of hemolysin. In Serratia marcescens, this protein is Hemolysin transporter protein ShlB (shlB).